A 317-amino-acid polypeptide reads, in one-letter code: MGGVIKSIFTFVLIVEFIIGNLGNSFIALVNCIDWVKGRKISSVDRILTALAISKISLVWLIFGSWCVSVFFPALFATEKMFRMLTNIWTVINHFSVWLATGLGTFYFLKIANFSNSIFLYLKWRVKKVVLVLLLVTSVFLFLNIALINIHINASINGYRRNKTCSSDSSNFTRFSSLIVLTSTVFIFIPFTLSLAMFLLLIFSMWKHRKKMQHTVKRSGDASTKAHRGVKSMMTFFLLYAIFSLSFFISVWTSERLEENLIILSQVMGMAYPSCHSCVLILGNKKLRQASLSVLLWLRYMFKDGEPSGHKEFRESS.

The Extracellular segment spans residues 1–7; sequence MGGVIKS. Residues 8-28 form a helical membrane-spanning segment; sequence IFTFVLIVEFIIGNLGNSFIA. At 29–55 the chain is on the cytoplasmic side; the sequence is LVNCIDWVKGRKISSVDRILTALAISK. The chain crosses the membrane as a helical span at residues 56 to 76; sequence ISLVWLIFGSWCVSVFFPALF. Residues 77 to 87 are Extracellular-facing; the sequence is ATEKMFRMLTN. Thr86 and Trp89 together coordinate cholesterol. A helical transmembrane segment spans residues 88-108; that stretch reads IWTVINHFSVWLATGLGTFYF. At 109–129 the chain is on the cytoplasmic side; that stretch reads LKIANFSNSIFLYLKWRVKKV. Residues 130-150 form a helical membrane-spanning segment; the sequence is VLVLLLVTSVFLFLNIALINI. Residues 151 to 184 lie on the Extracellular side of the membrane; that stretch reads HINASINGYRRNKTCSSDSSNFTRFSSLIVLTST. Residues Asn153, Asn162, and Asn171 are each glycosylated (N-linked (GlcNAc...) asparagine). Val180 lines the cholesterol pocket. The helical transmembrane segment at 185–205 threads the bilayer; it reads VFIFIPFTLSLAMFLLLIFSM. The Cytoplasmic segment spans residues 206-232; it reads WKHRKKMQHTVKRSGDASTKAHRGVKS. Residues 233–253 form a helical membrane-spanning segment; sequence MMTFFLLYAIFSLSFFISVWT. At 254–261 the chain is on the extracellular side; that stretch reads SERLEENL. A helical transmembrane segment spans residues 262–282; it reads IILSQVMGMAYPSCHSCVLIL. Ser265 and Met268 together coordinate cholesterol. Over 283 to 317 the chain is Cytoplasmic; that stretch reads GNKKLRQASLSVLLWLRYMFKDGEPSGHKEFRESS.

This sequence belongs to the G-protein coupled receptor T2R family. As to quaternary structure, core component of the TAS2R14-GNAI1 complex, consisting of TAS2R14, GNAI1, GNB1 and GNG2; within the complex interacts with GNAI1. Core component of the TAS2R14-GNAT3 complex, consisting of TAS2R14, GNAT3, GNB1 and GNG2; within the complex interacts with GNAT3. Core component of the TAS2R14-GNAS2 complex, consisting of TAS2R14, GNAS2, GNB1 and GNG2; within the complex interacts with GNAS2.

Its subcellular location is the membrane. It carries out the reaction Ca(2+)(in) = Ca(2+)(out). The catalysed reaction is 3',5'-cyclic AMP(in) = 3',5'-cyclic AMP(out). With respect to regulation, basal activity is enhanced by binding to bitter tastants, such as flufenamic acid and aristolochic acid. Regulated by cholesterol in a concentration-dependent manner. Its function is as follows. Gustducin-linked G-protein coupled receptor that plays a role in the perception of bitterness. The activity of this receptor stimulates GNAT3, activating the gustducin G-protein pathway. Likely plays a role in sensing the chemical composition of the gastrointestinal content and other extra-oral tissues via the inhibitory G-protein pathways. This chain is Taste receptor type 2 member 14 (TAS2R14), found in Pan paniscus (Pygmy chimpanzee).